A 376-amino-acid polypeptide reads, in one-letter code: Growth/differentiation factor 8 (376 aa).

The N-terminal stretch at 1-24 (MMQKLQMYVYIYLFMLIAAGPVDL) is a signal peptide. A propeptide spanning residues 25-267 (NEGSEREENV…VTDTPKRSRR (243 aa)) is cleaved from the precursor. The N-linked (GlcNAc...) asparagine glycan is linked to N72. 4 cysteine pairs are disulfide-bonded: C273–C283, C282–C341, C310–C373, and C314–C375.

The protein belongs to the TGF-beta family. Homodimer; disulfide-linked. Interacts with WFIKKN2, leading to inhibit its activity. Interacts with FSTL3. Synthesized as large precursor molecule that undergoes proteolytic cleavage to generate an N-terminal propeptide and a disulfide linked C-terminal dimer, which is the biologically active molecule. The circulating form consists of a latent complex of the C-terminal dimer and other proteins, including its propeptide, which maintain the C-terminal dimer in a latent, inactive state. Ligand activation requires additional cleavage of the prodomain by a tolloid-like metalloproteinase. In terms of tissue distribution, expressed specifically in developing and adult skeletal muscle. Weak expression in adipose tissue.

Its subcellular location is the secreted. In terms of biological role, acts specifically as a negative regulator of skeletal muscle growth. The chain is Growth/differentiation factor 8 (Mstn) from Mus musculus (Mouse).